Consider the following 215-residue polypeptide: Adenylyl-sulfate kinase (215 aa).

46-53 (GLSGAGKS) is an ATP binding site. S120 serves as the catalytic Phosphoserine intermediate.

It belongs to the APS kinase family.

It catalyses the reaction adenosine 5'-phosphosulfate + ATP = 3'-phosphoadenylyl sulfate + ADP + H(+). It participates in sulfur metabolism; hydrogen sulfide biosynthesis; sulfite from sulfate: step 2/3. Its function is as follows. Catalyzes the synthesis of activated sulfate. The polypeptide is Adenylyl-sulfate kinase (cysC) (Vibrio cholerae serotype O1 (strain ATCC 39315 / El Tor Inaba N16961)).